The sequence spans 270 residues: A-type potassium channel modulatory protein KCNIP2 (270 aa).

Over residues 1-17 the composition is skewed to basic and acidic residues; the sequence is MRGQGRKESLSDSRDLD. Residues 1–32 form a disordered region; it reads MRGQGRKESLSDSRDLDGSYDQLTGHPPGPTK. S9 carries the post-translational modification Phosphoserine. Residues C45 and C46 are each lipidated (S-palmitoyl cysteine). One can recognise an EF-hand 1; degenerate domain in the interval 81–137; it reads FELSTVCHRPEGLEQLQEQTKFTRKELQVLYRGFKNECPSGIVNEENFKQIYSQFFP. 3 consecutive EF-hand domains span residues 140–175, 176–211, and 224–259; these read DSSTYATFLFNAFDTNHDGSVSFEDFVAGLSVILRG, TVDDRLNWAFNLYDLNKDGCITKEEMLDIMKSIYDM, and APREHVESFFQKMDRNKDGVVTIEEFIESCQKDENI. Residues D153, N155, D157, S159, D164, D189, N191, D193, C195, E200, D237, N239, D241, and E248 each coordinate Ca(2+). The interval 257 to 270 is interaction with KCND2; that stretch reads ENIMRSMQLFDNVI.

The protein belongs to the recoverin family. Component of heteromultimeric potassium channels. Identified in potassium channel complexes containing KCND1, KCND2, KCND3, KCNIP1, KCNIP2, KCNIP3, KCNIP4, DPP6 and DPP10. The KCND2-KCNIP2 channel complex contains four KCND2 and four KCNIP2 subunits. Interacts with KCND2. Probably part of a complex consisting of KCNIP1, KCNIP2 isoform 3 and KCND2. At least isoform 2 and isoform 3 can self-associate to form homodimers and homotetramers. Isoform 3 interacts with KCNIP1 in a calcium-dependent manner. Interacts with KCND3; each KCNIP2 monomer interacts with two adjacent KCND3 subunits, through both the N-terminal inactivation ball of a KCND3 subunit and a C-terminal helix from the adjacent KCND3 subunit, clamping them together; this interaction modulates the channel gating kinetics. Palmitoylated. Palmitoylation enhances association with the plasma membrane. Expressed in brain. Colocalizes with KCND2 in excitatory neurons including cortical and hippocampal CA1 pyramidal cells. Isoform 3 is expressed in heart and in umbilical vein endothelial cells. Not expressed in fetal heart.

It localises to the cell membrane. Its function is as follows. Regulatory subunit of Kv4/D (Shal)-type voltage-gated rapidly inactivating A-type potassium channels. Modulates channel density, inactivation kinetics and rate of recovery from inactivation in a calcium-dependent and isoform-specific manner. Involved in KCND2 and KCND3 trafficking to the cell surface. May be required for the expression of I(To) currents in the heart. The chain is A-type potassium channel modulatory protein KCNIP2 from Homo sapiens (Human).